We begin with the raw amino-acid sequence, 600 residues long: tRNA uridine 5-carboxymethylaminomethyl modification enzyme MnmG (600 aa).

10-15 (GGGHAG) is a binding site for FAD. The tract at residues 216–239 (ADPQPRGFTGTPGPRAAESPTWQT) is disordered. 267-281 (GPRYCPSIEDKVVKF) contributes to the NAD(+) binding site.

This sequence belongs to the MnmG family. In terms of assembly, homodimer. Heterotetramer of two MnmE and two MnmG subunits. FAD is required as a cofactor.

It is found in the cytoplasm. Functionally, NAD-binding protein involved in the addition of a carboxymethylaminomethyl (cmnm) group at the wobble position (U34) of certain tRNAs, forming tRNA-cmnm(5)s(2)U34. In Deinococcus radiodurans (strain ATCC 13939 / DSM 20539 / JCM 16871 / CCUG 27074 / LMG 4051 / NBRC 15346 / NCIMB 9279 / VKM B-1422 / R1), this protein is tRNA uridine 5-carboxymethylaminomethyl modification enzyme MnmG.